Reading from the N-terminus, the 79-residue chain is RNA-binding protein KhpA (79 aa).

Residues Gly-30–Arg-79 form the KH domain.

It belongs to the KhpA RNA-binding protein family.

The protein localises to the cytoplasm. The protein resides in the nucleoid. Its function is as follows. A probable RNA-binding protein. The polypeptide is RNA-binding protein KhpA (Streptomyces coelicolor (strain ATCC BAA-471 / A3(2) / M145)).